Here is a 419-residue protein sequence, read N- to C-terminus: L-rhamnose isomerase (419 aa).

Mn(2+) is bound by residues H262, D294, and D296.

This sequence belongs to the rhamnose isomerase family. In terms of assembly, homotetramer. It depends on Mn(2+) as a cofactor.

The protein resides in the cytoplasm. It catalyses the reaction L-rhamnopyranose = L-rhamnulose. It functions in the pathway carbohydrate degradation; L-rhamnose degradation; glycerone phosphate from L-rhamnose: step 1/3. Its function is as follows. Catalyzes the interconversion of L-rhamnose and L-rhamnulose. The sequence is that of L-rhamnose isomerase from Salmonella typhimurium (strain LT2 / SGSC1412 / ATCC 700720).